Here is a 156-residue protein sequence, read N- to C-terminus: Small ribosomal subunit protein uS7 (156 aa).

It belongs to the universal ribosomal protein uS7 family. In terms of assembly, part of the 30S ribosomal subunit. Contacts proteins S9 and S11.

Functionally, one of the primary rRNA binding proteins, it binds directly to 16S rRNA where it nucleates assembly of the head domain of the 30S subunit. Is located at the subunit interface close to the decoding center, probably blocks exit of the E-site tRNA. The protein is Small ribosomal subunit protein uS7 of Salmonella agona (strain SL483).